A 299-amino-acid polypeptide reads, in one-letter code: Recombination-associated protein RdgC (299 aa).

This sequence belongs to the RdgC family.

It localises to the cytoplasm. The protein localises to the nucleoid. May be involved in recombination. The sequence is that of Recombination-associated protein RdgC from Cupriavidus pinatubonensis (strain JMP 134 / LMG 1197) (Cupriavidus necator (strain JMP 134)).